Here is a 341-residue protein sequence, read N- to C-terminus: MVVLPQPVTLDNHISLIPTYKPVPVLTSHSIPVVNLADPEAKTRIVKACEEFGFFKVVNHGVRPELMTRLEQEAIGFFGLPQSLKNRAGPPEPYGYGNKRIGPNGDVGWIEYLLLNANPQLSSPKTSAVFRQTPQIFRESVEEYMKEIKEVSYKVLEMVAEELGIEPRDTLSKMLRDEKSDSCLRLNHYPAAEEEAEKMVKVGFGEHTDPQIISVLRSNNTAGLQICVKDGSWVAVPPDHSSFFINVGDALQVMTNGRFKSVKHRVLADTRRSRISMIYFGGPPLSQKIAPLPCLVPEQDDWLYKEFTWSQYKSSAYKSKLGDYRLGLFEKQPLLNHKTLV.

Residues 179–283 (KSDSCLRLNH…RISMIYFGGP (105 aa)) form the Fe2OG dioxygenase domain. The Fe cation site is built by His-207, Asp-209, and His-264. Residue Arg-274 is part of the active site. Arg-274 contributes to the 2-oxoglutarate binding site.

The protein belongs to the iron/ascorbate-dependent oxidoreductase family. GA2OX subfamily. The cofactor is Fe(2+). Preferentially expressed in flowers, siliques, and upper stems. Expressed in cotyledons, at the base of the shoot apical meristem and developing leaf primordia.

The enzyme catalyses gibberellin A1 + 2-oxoglutarate + O2 = gibberellin A8 + succinate + CO2. The protein operates within plant hormone biosynthesis; gibberellin biosynthesis. In terms of biological role, catalyzes the 2-beta-hydroxylation of several biologically active gibberellins, leading to the homeostatic regulation of their endogenous level. Catabolism of gibberellins (GAs) plays a central role in plant development. Converts GA9/GA20 to GA51/GA29 and GA4/GA1 to GA34/GA8. This is Gibberellin 2-beta-dioxygenase 2 (GA2OX2) from Arabidopsis thaliana (Mouse-ear cress).